A 207-amino-acid chain; its full sequence is Superoxide dismutase [Mn] (207 aa).

4 residues coordinate Mn(2+): His-27, His-82, Asp-169, and His-173.

Belongs to the iron/manganese superoxide dismutase family. Mn(2+) is required as a cofactor.

The enzyme catalyses 2 superoxide + 2 H(+) = H2O2 + O2. Functionally, destroys superoxide anion radicals which are normally produced within the cells and which are toxic to biological systems. The polypeptide is Superoxide dismutase [Mn] (sodA) (Yersinia enterocolitica).